Consider the following 468-residue polypeptide: Interleukin-6 receptor subunit alpha (468 aa).

The signal sequence occupies residues 1–19; the sequence is MLAVGCALLAALLAAPGAA. The Extracellular segment spans residues 20–365; the sequence is LAPRRCPAQE…VQDSSSVPLP (346 aa). Disulfide bonds link cysteine 25–cysteine 193, cysteine 47–cysteine 96, cysteine 121–cysteine 132, and cysteine 165–cysteine 176. The Ig-like C2-type domain occupies 26-112; it reads PAQEVARGVL…AGTVHLLVDV (87 aa). Residues asparagine 55 and asparagine 93 are each glycosylated (N-linked (GlcNAc...) asparagine). 2 consecutive Fibronectin type-III domains span residues 113–217 and 218–316; these read PPEE…LQPD and PPAN…TPWT. N-linked (GlcNAc...) asparagine glycosylation is found at asparagine 221 and asparagine 245. The short motif at 303–307 is the WSXWS motif element; it reads WSEWS. Residues 303–328 are disordered; it reads WSEWSPEAMGTPWTESRSPPAENEVS. N-linked (GlcNAc...) asparagine glycosylation is present at asparagine 350. A glycan (O-linked (GlcNAc) threonine) is linked at threonine 352. The helical transmembrane segment at 366–386 threads the bilayer; it reads TFLVAGGSLAFGTLLCIAIVL. Residues 387–468 lie on the Cytoplasmic side of the membrane; it reads RFKKTWKLRA…ISNTDYFFPR (82 aa). Over residues 421–433 the composition is skewed to pro residues; that stretch reads TPVLVPLISPPVS. The segment at 421-468 is disordered; it reads TPVLVPLISPPVSPSSLGSDNTSSHNRPDARDPRSPYDISNTDYFFPR. A compositionally biased stretch (basic and acidic residues) spans 446-455; sequence NRPDARDPRS. Over residues 458-468 the composition is skewed to polar residues; it reads DISNTDYFFPR.

The protein belongs to the type I cytokine receptor family. Type 3 subfamily. In terms of assembly, component of a hexamer of two molecules each of IL6, IL6R and IL6ST; first binds to IL6 to associate with the signaling subunit IL6ST. Interacts (via N-terminal ectodomain) with SORL1; this interaction may affect IL6-binding to IL6R, hence decrease IL6 'classic-signaling'. As to quaternary structure, also interacts with SORL1; this interaction leads to soluble IL6R internalization. May form a trimeric complex with the soluble SORL1 ectodomain and circulating IL6 receptor; this interaction might stabilize circulating IL6, hence promote IL6 'trans-signaling,. A short soluble form is released from the membrane by proteolysis. The sIL6R is formed mostly by limited proteolysis of membrane-bound receptors, a process referred to as ectodomain shedding, but is also directly secreted from the cells after alternative mRNA splicing. mIL6R is cleaved by the proteases ADAM10 and ADAM17. In terms of processing, glycosylated. Glycosylation is dispensable for transport, signaling, and cell-surface turnover. Glycosylation at Asn-55 is a protease-regulatory exosite. Glycosylation is required for ADAM17-mediated proteolysis. As to expression, expressed in peripheral blood mononuclear cells and weakly found in urine and serum. 1%-20% of the total sIL6R in plasma is generated by alternative splicing.

It is found in the cell membrane. The protein resides in the secreted. Its activity is regulated as follows. Classic and trans-signaling are both inhibited by tocilizumab, a humanized monoclonal antibody that blocks interleukin IL6R signaling. Functionally, part of the receptor for interleukin 6. Binds to IL6 with low affinity, but does not transduce a signal. Signal activation necessitate an association with IL6ST. Activation leads to the regulation of the immune response, acute-phase reactions and hematopoiesis. The interaction with membrane-bound IL6R and IL6ST stimulates 'classic signaling', the restricted expression of the IL6R limits classic IL6 signaling to only a few tissues such as the liver and some cells of the immune system. Whereas the binding of IL6 and soluble IL6R to IL6ST stimulates 'trans-signaling'. Alternatively, 'cluster signaling' occurs when membrane-bound IL6:IL6R complexes on transmitter cells activate IL6ST receptors on neighboring receiver cells. Signaling via the membrane-bound IL6R is mostly regenerative and anti-inflammatory. Drives naive CD4(+) T cells to the Th17 lineage, through 'cluster signaling' by dendritic cells. In terms of biological role, soluble form of IL6 receptor (sIL6R) that acts as an agonist of IL6 activity. The IL6:sIL6R complex (hyper-IL6) binds to IL6ST/gp130 on cell surfaces and induces signaling also on cells that do not express membrane-bound IL6R in a process called IL6 'trans-signaling'. sIL6R is causative for the pro-inflammatory properties of IL6 and an important player in the development of chronic inflammatory diseases. In complex with IL6, is required for induction of VEGF production. Plays a protective role during liver injury, being required for maintenance of tissue regeneration. 'Trans-signaling' in central nervous system regulates energy and glucose homeostasis. The sequence is that of Interleukin-6 receptor subunit alpha from Homo sapiens (Human).